Consider the following 124-residue polypeptide: Histone H2B 1/2 (124 aa).

The disordered stretch occupies residues 1-32; sequence MPEPAKAAPKKGSKKAVTKTAGKGGKKRKRTR. K6 and K11 each carry N6-acetyllysine. Positions 8–17 are enriched in basic residues; it reads APKKGSKKAV. The residue at position 13 (S13) is a Phosphoserine. An N6-acetyllysine mark is found at K14 and K19. O-linked (GlcNAc) serine glycosylation is present at S111. A Glycyl lysine isopeptide (Lys-Gly) (interchain with G-Cter in ubiquitin) cross-link involves residue K119.

This sequence belongs to the histone H2B family. The nucleosome is a histone octamer containing two molecules each of H2A, H2B, H3 and H4 assembled in one H3-H4 heterotetramer and two H2A-H2B heterodimers. The octamer wraps approximately 147 bp of DNA. In terms of processing, monoubiquitination of Lys-119 by the BRE1 gives a specific tag for epigenetic transcriptional activation and is also prerequisite for histone H3 'Lys-4' and 'Lys-79' methylation. Phosphorylated during apoptosis; which facilitates apoptotic chromatin condensation. Post-translationally, glcNAcylation at Ser-111 promotes monoubiquitination of Lys-119. It fluctuates in response to extracellular glucose, and associates with transcribed genes.

Its subcellular location is the nucleus. The protein localises to the chromosome. Its function is as follows. Core component of nucleosome. Nucleosomes wrap and compact DNA into chromatin, limiting DNA accessibility to the cellular machineries which require DNA as a template. Histones thereby play a central role in transcription regulation, DNA repair, DNA replication and chromosomal stability. DNA accessibility is regulated via a complex set of post-translational modifications of histones, also called histone code, and nucleosome remodeling. The chain is Histone H2B 1/2 from Danio rerio (Zebrafish).